A 44-amino-acid polypeptide reads, in one-letter code: DNA-directed RNA polymerase subunit Rpo12 (44 aa).

Cys8, Cys22, and Cys25 together coordinate Zn(2+).

It belongs to the archaeal Rpo12/eukaryotic RPC10 RNA polymerase subunit family. Part of the RNA polymerase complex. Zn(2+) is required as a cofactor.

Its subcellular location is the cytoplasm. It catalyses the reaction RNA(n) + a ribonucleoside 5'-triphosphate = RNA(n+1) + diphosphate. Functionally, DNA-dependent RNA polymerase (RNAP) catalyzes the transcription of DNA into RNA using the four ribonucleoside triphosphates as substrates. In Halobacterium salinarum (strain ATCC 29341 / DSM 671 / R1), this protein is DNA-directed RNA polymerase subunit Rpo12.